Reading from the N-terminus, the 796-residue chain is U-box domain-containing protein 51 (796 aa).

3 disordered regions span residues 163-195 (DMDTETSIADDRSESRFSSDSHSGTVSSTSSHQ), 218-240 (TNIGKQNNEPHHHHHNRAGSLDV), and 270-292 (RSSQMEEASSSSTYSDPTSSSSQ). A compositionally biased stretch (basic and acidic residues) spans 171–181 (ADDRSESRFSS). Over residues 182-195 (DSHSGTVSSTSSHQ) the composition is skewed to low complexity. The segment covering 270–291 (RSSQMEEASSSSTYSDPTSSSS) has biased composition (low complexity). Residues 298-407 (ELEKLKIELR…QRLEDALEGG (110 aa)) adopt a coiled-coil conformation. The 272-residue stretch at 429-700 (FSDELKIGVG…DLGKEILPVL (272 aa)) folds into the Protein kinase domain. ATP contacts are provided by residues 435–443 (IGVGGYGSV) and lysine 456. Residue aspartate 557 is the Proton acceptor of the active site. The U-box domain occupies 724 to 796 (NAPTHFYCPI…IKEWRSQLIK (73 aa)).

The protein belongs to the protein kinase superfamily. Ser/Thr protein kinase family.

It carries out the reaction L-seryl-[protein] + ATP = O-phospho-L-seryl-[protein] + ADP + H(+). It catalyses the reaction L-threonyl-[protein] + ATP = O-phospho-L-threonyl-[protein] + ADP + H(+). The catalysed reaction is S-ubiquitinyl-[E2 ubiquitin-conjugating enzyme]-L-cysteine + [acceptor protein]-L-lysine = [E2 ubiquitin-conjugating enzyme]-L-cysteine + N(6)-ubiquitinyl-[acceptor protein]-L-lysine.. It functions in the pathway protein modification; protein ubiquitination. In terms of biological role, functions as an E3 ubiquitin ligase. The polypeptide is U-box domain-containing protein 51 (PUB51) (Arabidopsis thaliana (Mouse-ear cress)).